Here is a 374-residue protein sequence, read N- to C-terminus: Peptide chain release factor 2 (374 aa).

N5-methylglutamine is present on Q248.

The protein belongs to the prokaryotic/mitochondrial release factor family. Post-translationally, methylated by PrmC. Methylation increases the termination efficiency of RF2.

It localises to the cytoplasm. In terms of biological role, peptide chain release factor 2 directs the termination of translation in response to the peptide chain termination codons UGA and UAA. The protein is Peptide chain release factor 2 of Thermomicrobium roseum (strain ATCC 27502 / DSM 5159 / P-2).